The chain runs to 430 residues: ATP-dependent protease ATPase subunit HslU (430 aa).

Residues valine 18, glycine 60–glutamate 65, aspartate 243, glutamate 308, and arginine 380 each bind ATP.

The protein belongs to the ClpX chaperone family. HslU subfamily. As to quaternary structure, a double ring-shaped homohexamer of HslV is capped on each side by a ring-shaped HslU homohexamer. The assembly of the HslU/HslV complex is dependent on binding of ATP.

The protein resides in the cytoplasm. Functionally, ATPase subunit of a proteasome-like degradation complex; this subunit has chaperone activity. The binding of ATP and its subsequent hydrolysis by HslU are essential for unfolding of protein substrates subsequently hydrolyzed by HslV. HslU recognizes the N-terminal part of its protein substrates and unfolds these before they are guided to HslV for hydrolysis. In Caulobacter vibrioides (strain ATCC 19089 / CIP 103742 / CB 15) (Caulobacter crescentus), this protein is ATP-dependent protease ATPase subunit HslU.